We begin with the raw amino-acid sequence, 60 residues long: MGNPARKFSKARRDSRRAQTFKLSLPGMVECPNCHEMKLAHRVCKKCGYYKGKEIVAVEK.

It belongs to the bacterial ribosomal protein bL32 family.

The protein is Large ribosomal subunit protein bL32 of Clostridium acetobutylicum (strain ATCC 824 / DSM 792 / JCM 1419 / IAM 19013 / LMG 5710 / NBRC 13948 / NRRL B-527 / VKM B-1787 / 2291 / W).